The sequence spans 262 residues: Intercellular adhesion molecule 4 (262 aa).

The signal sequence occupies residues 1-22 (MESALLLPSLLLVAAYPRGGSP). The Extracellular segment spans residues 23–231 (QQEWMQSPPA…LTVLALSPAS (209 aa)). Ig-like C2-type domains are found at residues 54–116 (GGSA…TREA) and 138–209 (GHKY…LNLD). N-linked (GlcNAc...) asparagine glycans are attached at residues asparagine 60, asparagine 84, and asparagine 182. 4 cysteine pairs are disulfide-bonded: cysteine 61-cysteine 105, cysteine 61-cysteine 109, cysteine 65-cysteine 109, and cysteine 145-cysteine 202. Residues 232–252 (IALASTSIATLVGILLAVGAV) traverse the membrane as a helical segment. Over 253-262 (YVRKYLAVQT) the chain is Cytoplasmic.

Belongs to the immunoglobulin superfamily. ICAM family.

The protein resides in the cell membrane. It localises to the secreted. Functionally, adhesion molecule that binds to leukocyte adhesion LFA-1 protein LFA-1 (integrin alpha-L/beta-2). ICAM4 is also a ligand for alpha-4/beta-1 and alpha-V integrins. Isoform 2 may modulate binding of membrane-associated ICAM4. This Mus musculus (Mouse) protein is Intercellular adhesion molecule 4 (Icam4).